A 31-amino-acid polypeptide reads, in one-letter code: Photosystem II reaction center protein M (31 aa).

A helical transmembrane segment spans residues 5-25 (ILAFIATALLILVPTAFLLII).

The protein belongs to the PsbM family. PSII is composed of 1 copy each of membrane proteins PsbA, PsbB, PsbC, PsbD, PsbE, PsbF, PsbH, PsbI, PsbJ, PsbK, PsbL, PsbM, PsbT, PsbX, PsbY, PsbZ, Psb30/Ycf12, at least 3 peripheral proteins of the oxygen-evolving complex and a large number of cofactors. It forms dimeric complexes.

Its subcellular location is the plastid membrane. Functionally, one of the components of the core complex of photosystem II (PSII). PSII is a light-driven water:plastoquinone oxidoreductase that uses light energy to abstract electrons from H(2)O, generating O(2) and a proton gradient subsequently used for ATP formation. It consists of a core antenna complex that captures photons, and an electron transfer chain that converts photonic excitation into a charge separation. This subunit is found at the monomer-monomer interface. The sequence is that of Photosystem II reaction center protein M from Cuscuta reflexa (Southern Asian dodder).